A 344-amino-acid chain; its full sequence is Dihydroorotase (344 aa).

Residues H13 and H15 each coordinate Zn(2+). Residues 15–17 (HVR) and N41 contribute to the substrate site. Zn(2+) is bound by residues K99, H136, and H174. K99 is subject to N6-carboxylysine. Residue H136 coordinates substrate. L219 is a substrate binding site. A Zn(2+)-binding site is contributed by D247. The active site involves D247. The substrate site is built by H251 and A263.

This sequence belongs to the metallo-dependent hydrolases superfamily. DHOase family. Class II DHOase subfamily. Homodimer. Requires Zn(2+) as cofactor.

The catalysed reaction is (S)-dihydroorotate + H2O = N-carbamoyl-L-aspartate + H(+). The protein operates within pyrimidine metabolism; UMP biosynthesis via de novo pathway; (S)-dihydroorotate from bicarbonate: step 3/3. Catalyzes the reversible cyclization of carbamoyl aspartate to dihydroorotate. In Aromatoleum aromaticum (strain DSM 19018 / LMG 30748 / EbN1) (Azoarcus sp. (strain EbN1)), this protein is Dihydroorotase.